We begin with the raw amino-acid sequence, 348 residues long: uncharacterized protein (348 aa).

This is an uncharacterized protein from Sulfolobus islandicus filamentous virus (isolate Iceland/Hveragerdi) (SIFV).